The sequence spans 640 residues: 1-deoxy-D-xylulose-5-phosphate synthase (640 aa).

Residues His72 and 113–115 (GHA) each bind thiamine diphosphate. Asp144 contributes to the Mg(2+) binding site. Thiamine diphosphate-binding positions include 145–146 (GA), Asn174, Tyr287, and Glu370. Asn174 serves as a coordination point for Mg(2+).

It belongs to the transketolase family. DXPS subfamily. As to quaternary structure, homodimer. Mg(2+) is required as a cofactor. Thiamine diphosphate serves as cofactor.

It carries out the reaction D-glyceraldehyde 3-phosphate + pyruvate + H(+) = 1-deoxy-D-xylulose 5-phosphate + CO2. Its pathway is metabolic intermediate biosynthesis; 1-deoxy-D-xylulose 5-phosphate biosynthesis; 1-deoxy-D-xylulose 5-phosphate from D-glyceraldehyde 3-phosphate and pyruvate: step 1/1. Functionally, catalyzes the acyloin condensation reaction between C atoms 2 and 3 of pyruvate and glyceraldehyde 3-phosphate to yield 1-deoxy-D-xylulose-5-phosphate (DXP). This chain is 1-deoxy-D-xylulose-5-phosphate synthase, found in Synechocystis sp. (strain ATCC 27184 / PCC 6803 / Kazusa).